A 686-amino-acid polypeptide reads, in one-letter code: Terminal beta-(1-&gt;2)-arabinofuranosyltransferase (686 aa).

The disordered stretch occupies residues M1 to S42. Basic and acidic residues predominate over residues P8–D25. Residues E29–S42 are compositionally biased toward polar residues. 10 helical membrane passes run T48–W68, I127–T147, I155–F175, L180–A200, I219–V239, W261–F281, G316–W336, T353–I373, M384–V404, and L411–G431.

The protein belongs to the AftB family.

It is found in the membrane. It participates in cell wall biogenesis; cell wall polysaccharide biosynthesis. Functionally, involved in the biosynthesis of the arabinogalactan (AG) region of the mycolylarabinogalactan-peptidoglycan (mAGP) complex, an essential component of the cell wall. Catalyzes the transfer of arabinofuranosyl (Araf) residues from the sugar donor decaprenyl-phospho-arabinose (DPA) to the arabinan domain to form terminal beta-(1-&gt;2)-linked Araf residues, which marks the end point for AG arabinan biosynthesis before decoration with mycolic acids. The sequence is that of Terminal beta-(1-&gt;2)-arabinofuranosyltransferase (aftB) from Corynebacterium glutamicum (strain ATCC 13032 / DSM 20300 / JCM 1318 / BCRC 11384 / CCUG 27702 / LMG 3730 / NBRC 12168 / NCIMB 10025 / NRRL B-2784 / 534).